The primary structure comprises 580 residues: Acyl-coenzyme A synthetase ACSM4, mitochondrial (580 aa).

A mitochondrion-targeting transit peptide spans 1–22 (MKVLLRCQRLRFIWLAKPAGRH). ATP contacts are provided by residues 229–237 (TSGTTGSPK), 368–373 (EGYGQT), D455, R470, and K566.

Belongs to the ATP-dependent AMP-binding enzyme family. Requires Mg(2+) as cofactor. It depends on Mn(2+) as a cofactor. Detected in adult olfactory epithelium.

It is found in the mitochondrion. It carries out the reaction a medium-chain fatty acid + ATP + CoA = a medium-chain fatty acyl-CoA + AMP + diphosphate. The enzyme catalyses hexanoate + ATP + CoA = hexanoyl-CoA + AMP + diphosphate. The catalysed reaction is octanoate + ATP + CoA = octanoyl-CoA + AMP + diphosphate. It catalyses the reaction decanoate + ATP + CoA = decanoyl-CoA + AMP + diphosphate. It carries out the reaction dodecanoate + ATP + CoA = dodecanoyl-CoA + AMP + diphosphate. Its function is as follows. Catalyzes the activation of fatty acids by CoA to produce an acyl-CoA, the first step in fatty acid metabolism. Capable of activating medium-chain fatty acids with a preference for C6-12 fatty acids. The polypeptide is Acyl-coenzyme A synthetase ACSM4, mitochondrial (Acsm4) (Rattus norvegicus (Rat)).